The primary structure comprises 140 residues: 3-hydroxyacyl-[acyl-carrier-protein] dehydratase FabZ (140 aa).

Residue His47 is part of the active site.

The protein belongs to the thioester dehydratase family. FabZ subfamily.

The protein resides in the cytoplasm. It catalyses the reaction a (3R)-hydroxyacyl-[ACP] = a (2E)-enoyl-[ACP] + H2O. In terms of biological role, involved in unsaturated fatty acids biosynthesis. Catalyzes the dehydration of short chain beta-hydroxyacyl-ACPs and long chain saturated and unsaturated beta-hydroxyacyl-ACPs. This Streptococcus pyogenes serotype M49 (strain NZ131) protein is 3-hydroxyacyl-[acyl-carrier-protein] dehydratase FabZ.